We begin with the raw amino-acid sequence, 307 residues long: Recombination-associated protein RdgC (307 aa).

Belongs to the RdgC family.

It localises to the cytoplasm. The protein resides in the nucleoid. In terms of biological role, may be involved in recombination. The polypeptide is Recombination-associated protein RdgC (Colwellia psychrerythraea (strain 34H / ATCC BAA-681) (Vibrio psychroerythus)).